A 204-amino-acid chain; its full sequence is Prephenate decarboxylase (204 aa).

The protein belongs to the prephenate decarboxylase family.

It is found in the cytoplasm. The enzyme catalyses prephenate + H(+) = 3-[(4R)-4-hydroxycyclohexa-1,5-dien-1-yl]-2-oxopropanoate + CO2. It participates in antibiotic biosynthesis; bacilysin biosynthesis. In terms of biological role, part of the bacABCDEF operon responsible for the biosynthesis of the nonribosomally synthesized dipeptide antibiotic bacilysin, composed of L-alanine and L-anticapsin. Bacilysin is an irreversible inactivator of the glutaminase domain of glucosamine synthetase. BacA is an unusual prephenate decarboxylase that avoids the typical aromatization of the cyclohexadienol ring of prephenate. BacA catalyzes the protonation of prephenate (1-carboxy-4-hydroxy-alpha-oxo-2,5-cyclohexadiene-1-propanoic acid) at C6 position, followed by a decarboxylation to produce the endocyclic-delta(4),delta(8)-7R-dihydro-hydroxyphenylpyruvate (en-H2HPP). En-H2HPP is able to undergo a slow nonenzymatic isomerization to produce the exocyclic-delta(3),delta(5)-dihydro-hydroxyphenylpyruvate (ex-H2HPP). BacA isomerizes only the pro-R double bond in prephenate. This chain is Prephenate decarboxylase, found in Bacillus amyloliquefaciens (Bacillus velezensis).